Consider the following 395-residue polypeptide: E3 ubiquitin-protein ligase RNFT1 (395 aa).

Disordered regions lie at residues 1–58 and 78–97; these read MQAS…SSRN and YSHSEARPPDDFATESGEHG. The next 6 membrane-spanning stretches (helical) occupy residues 118–138, 165–185, 193–213, 216–236, 258–278, and 283–303; these read ILILGIKLVMQHITGISLGIG, CAWLLVFLAGSSVLLYYTFHS, IFLNPTLEQLSFWEVLWIVGI, FILKFFFMGLKCLILLVPSFI, IFVPIPVWFRYLISYGEFGNV, and LGILLALLYLILKLLDFFGHL. The required for ubiquitin ligase activity and for protection against ER stress-induced cell death stretch occupies residues 328-379; the sequence is CSDMDGICTICQAEFQKPVLLFCQHIFCEECITLWFNREKTCPLCRTVISEC. The segment at 335 to 373 adopts an RING-type zinc-finger fold; it reads CTICQAEFQKPVLLFCQHIFCEECITLWFNREKTCPLCR.

Predominantly expressed in testis.

It is found in the early endosome membrane. It carries out the reaction S-ubiquitinyl-[E2 ubiquitin-conjugating enzyme]-L-cysteine + [acceptor protein]-L-lysine = [E2 ubiquitin-conjugating enzyme]-L-cysteine + N(6)-ubiquitinyl-[acceptor protein]-L-lysine.. It participates in protein modification; protein ubiquitination. E3 ubiquitin-protein ligase that acts in the endoplasmic reticulum (ER)-associated degradation (ERAD) pathway, which targets misfolded proteins that accumulate in the endoplasmic reticulum (ER) for ubiquitination and subsequent proteasome-mediated degradation. Protects cells from ER stress-induced apoptosis. The protein is E3 ubiquitin-protein ligase RNFT1 (Rnft1) of Mus musculus (Mouse).